We begin with the raw amino-acid sequence, 716 residues long: Polyribonucleotide nucleotidyltransferase (716 aa).

Mg(2+) is bound by residues D480 and D486. Residues 547–606 form the KH domain; that stretch reads PKIVQLQIDIDKISLVIGSTGKTVKAITDEFEVKVQIEQNGKIILFGDDDFKMQKAKERI. The S1 motif domain maps to 616 to 711; the sequence is GEIYEGTVKK…KFGKIDLEIV (96 aa).

The protein belongs to the polyribonucleotide nucleotidyltransferase family. Requires Mg(2+) as cofactor.

It localises to the cytoplasm. The catalysed reaction is RNA(n+1) + phosphate = RNA(n) + a ribonucleoside 5'-diphosphate. Involved in mRNA degradation. Catalyzes the phosphorolysis of single-stranded polyribonucleotides processively in the 3'- to 5'-direction. The chain is Polyribonucleotide nucleotidyltransferase from Borreliella burgdorferi (strain ATCC 35210 / DSM 4680 / CIP 102532 / B31) (Borrelia burgdorferi).